The primary structure comprises 505 residues: Catalase (505 aa).

Residues 1 to 25 are disordered; that stretch reads MSKQDGKLTGLFGAPVSDRENSMTA. Catalysis depends on residues histidine 56 and asparagine 129. A heme-binding site is contributed by tyrosine 339.

The protein belongs to the catalase family. Homodimer. The cofactor is heme.

The enzyme catalyses 2 H2O2 = O2 + 2 H2O. Decomposes hydrogen peroxide into water and oxygen; serves to protect cells from the toxic effects of hydrogen peroxide. The polypeptide is Catalase (katA) (Staphylococcus warneri).